The chain runs to 267 residues: MLSAMDVMIHSSSFLLPCDETCGTRYALVVLNQNLPRFTPLLWEHAKLRLCADGGANRIYDELPLFFPHEDPFVIRNRYKPDVIKGDMDSIRRDVLDFYVYWGTKVIDESHDQDTTDLDKCISYIRHSTLNQESSRLQILATGALGGRFDHEAGNLNVLYRYPDTRIVLLSDDCLIQLLPKTHRHEIHIHSSLQGPHCGLIPIGTPSANTTTSGLKWDLSNTEMRFGGLISTSNLVKEEIITVESDSDLLWTISIKKTGLPVQDHKP.

It belongs to the thiamine pyrophosphokinase family. As to expression, expressed in leaves and at lower levels in flowers.

Its subcellular location is the cytoplasm. The protein resides in the cytosol. The catalysed reaction is thiamine + ATP = thiamine diphosphate + AMP + H(+). It functions in the pathway cofactor biosynthesis; thiamine diphosphate biosynthesis; thiamine diphosphate from thiamine: step 1/1. Functionally, catalyzes the phosphorylation of thiamine to thiamine pyrophosphate (TPP). TPP is an active cofactor for enzymes involved in glycolysis and energy production. Plant leaves require high levels of TPP for photosynthesis and carbohydrate metabolism. The polypeptide is Thiamine pyrophosphokinase 2 (Arabidopsis thaliana (Mouse-ear cress)).